Here is an 81-residue protein sequence, read N- to C-terminus: Pyruvate synthase subunit PorD (81 aa).

Positions 1 to 20 are disordered; sequence MESLGATVKEPGSTRKNKTG. 2 4Fe-4S ferredoxin-type domains span residues 25–54 and 51–80; these read FKPF…KEHE and KEHE…MERE. [4Fe-4S] cluster contacts are provided by Cys-34, Cys-37, Cys-40, Cys-44, Cys-60, Cys-63, Cys-66, and Cys-70.

As to quaternary structure, heterotetramer of one alpha, one beta, one delta and one gamma chain. It depends on [4Fe-4S] cluster as a cofactor.

The chain is Pyruvate synthase subunit PorD (porD) from Methanothermobacter marburgensis (strain ATCC BAA-927 / DSM 2133 / JCM 14651 / NBRC 100331 / OCM 82 / Marburg) (Methanobacterium thermoautotrophicum).